The following is a 220-amino-acid chain: Ribose-5-phosphate isomerase A (220 aa).

Substrate contacts are provided by residues 28–31 (TGST), 81–84 (DGAD), and 94–97 (KGGG). The active-site Proton acceptor is the Glu103. A substrate-binding site is contributed by Lys121.

This sequence belongs to the ribose 5-phosphate isomerase family. Homodimer.

It carries out the reaction aldehydo-D-ribose 5-phosphate = D-ribulose 5-phosphate. Its pathway is carbohydrate degradation; pentose phosphate pathway; D-ribose 5-phosphate from D-ribulose 5-phosphate (non-oxidative stage): step 1/1. Catalyzes the reversible conversion of ribose-5-phosphate to ribulose 5-phosphate. The protein is Ribose-5-phosphate isomerase A of Hydrogenovibrio crunogenus (strain DSM 25203 / XCL-2) (Thiomicrospira crunogena).